We begin with the raw amino-acid sequence, 330 residues long: Protoheme IX farnesyltransferase (330 aa).

A run of 9 helical transmembrane segments spans residues Leu30–Ala50, Phe58–Val78, Leu106–Leu126, Leu127–Leu147, Ile155–Gly175, Trp182–Leu202, Ile228–Met248, Leu249–Val269, and Ala281–Leu301.

This sequence belongs to the UbiA prenyltransferase family. Protoheme IX farnesyltransferase subfamily.

It localises to the cell inner membrane. It carries out the reaction heme b + (2E,6E)-farnesyl diphosphate + H2O = Fe(II)-heme o + diphosphate. It participates in porphyrin-containing compound metabolism; heme O biosynthesis; heme O from protoheme: step 1/1. In terms of biological role, converts heme B (protoheme IX) to heme O by substitution of the vinyl group on carbon 2 of heme B porphyrin ring with a hydroxyethyl farnesyl side group. The chain is Protoheme IX farnesyltransferase from Synechococcus sp. (strain JA-2-3B'a(2-13)) (Cyanobacteria bacterium Yellowstone B-Prime).